The following is a 514-amino-acid chain: Putative thymidine phosphorylase (514 aa).

This sequence belongs to the thymidine/pyrimidine-nucleoside phosphorylase family. Type 2 subfamily.

The catalysed reaction is thymidine + phosphate = 2-deoxy-alpha-D-ribose 1-phosphate + thymine. This Sphingopyxis alaskensis (strain DSM 13593 / LMG 18877 / RB2256) (Sphingomonas alaskensis) protein is Putative thymidine phosphorylase.